Reading from the N-terminus, the 213-residue chain is Protein-L-isoaspartate O-methyltransferase (213 aa).

Residue S61 is part of the active site.

The protein belongs to the methyltransferase superfamily. L-isoaspartyl/D-aspartyl protein methyltransferase family.

The protein resides in the cytoplasm. It carries out the reaction [protein]-L-isoaspartate + S-adenosyl-L-methionine = [protein]-L-isoaspartate alpha-methyl ester + S-adenosyl-L-homocysteine. Its function is as follows. Catalyzes the methyl esterification of L-isoaspartyl residues in peptides and proteins that result from spontaneous decomposition of normal L-aspartyl and L-asparaginyl residues. It plays a role in the repair and/or degradation of damaged proteins. This is Protein-L-isoaspartate O-methyltransferase from Maricaulis maris (strain MCS10) (Caulobacter maris).